Consider the following 533-residue polypeptide: Probable intron-encoded endonuclease 3 (533 aa).

A run of 3 helical transmembrane segments spans residues 1-21 (MYLS…FFGR), 30-50 (LITC…FFEV), and 81-101 (LTVA…IYSI). The segment at 1-108 (MYLSIIILPL…YSISYMSHDP (108 aa)) is ndh-5 exon 1 encoded. The segment at 109 to 533 (RGRVRGKRVY…SISLLLGRRR (425 aa)) is ndh-5 intron 1 encoded.

In the N-terminal section; belongs to the complex I subunit 5 family. The protein in the C-terminal section; belongs to the LAGLIDADG endonuclease family.

It localises to the mitochondrion membrane. In terms of biological role, mitochondrial DNA endonuclease involved in intron homing. The chain is Probable intron-encoded endonuclease 3 from Neurospora crassa (strain ATCC 24698 / 74-OR23-1A / CBS 708.71 / DSM 1257 / FGSC 987).